The following is a 450-amino-acid chain: UDP-N-acetylmuramoylalanine--D-glutamate ligase (450 aa).

Residue 119–125 (GSNGKTT) participates in ATP binding.

Belongs to the MurCDEF family.

It is found in the cytoplasm. The enzyme catalyses UDP-N-acetyl-alpha-D-muramoyl-L-alanine + D-glutamate + ATP = UDP-N-acetyl-alpha-D-muramoyl-L-alanyl-D-glutamate + ADP + phosphate + H(+). It participates in cell wall biogenesis; peptidoglycan biosynthesis. In terms of biological role, cell wall formation. Catalyzes the addition of glutamate to the nucleotide precursor UDP-N-acetylmuramoyl-L-alanine (UMA). The protein is UDP-N-acetylmuramoylalanine--D-glutamate ligase of Streptococcus sanguinis (strain SK36).